A 209-amino-acid chain; its full sequence is MSNKKRSASSSRWLQEHFSDKYVIQAQKKGLRSRAWFKLDEIQQSDKLFKQGMTVVDLGAAPGGWSQYAVTQIGSKGRVIACDLLPMDPIVGVDFLQGDFRDELVLKALLERVGDKKVQVVMCDMAPNMSGTPAVDIPKSMYLVELALDMCRDVLAPGGSFLVKVFQGDGFDEYLREIRSLFTKVKIRKPDASRARSREVYIVATGRKL.

Residues glycine 63, tryptophan 65, aspartate 83, aspartate 99, and aspartate 124 each coordinate S-adenosyl-L-methionine. The active-site Proton acceptor is lysine 164.

This sequence belongs to the class I-like SAM-binding methyltransferase superfamily. RNA methyltransferase RlmE family.

The protein resides in the cytoplasm. The enzyme catalyses uridine(2552) in 23S rRNA + S-adenosyl-L-methionine = 2'-O-methyluridine(2552) in 23S rRNA + S-adenosyl-L-homocysteine + H(+). In terms of biological role, specifically methylates the uridine in position 2552 of 23S rRNA at the 2'-O position of the ribose in the fully assembled 50S ribosomal subunit. This is Ribosomal RNA large subunit methyltransferase E from Yersinia pseudotuberculosis serotype O:1b (strain IP 31758).